A 739-amino-acid chain; its full sequence is Elongation factor 2 (739 aa).

Positions 19–261 constitute a tr-type G domain; sequence RNIRNIGIIA…MVALHVPDPI (243 aa). GTP contacts are provided by residues 28–35, 94–98, and 148–151; these read AHVDHGKT, DTPGH, and NKID. H603 is subject to Diphthamide.

It belongs to the TRAFAC class translation factor GTPase superfamily. Classic translation factor GTPase family. EF-G/EF-2 subfamily.

The protein localises to the cytoplasm. Catalyzes the GTP-dependent ribosomal translocation step during translation elongation. During this step, the ribosome changes from the pre-translocational (PRE) to the post-translocational (POST) state as the newly formed A-site-bound peptidyl-tRNA and P-site-bound deacylated tRNA move to the P and E sites, respectively. Catalyzes the coordinated movement of the two tRNA molecules, the mRNA and conformational changes in the ribosome. This chain is Elongation factor 2, found in Korarchaeum cryptofilum (strain OPF8).